The following is a 137-amino-acid chain: Large ribosomal subunit protein uL14 (137 aa).

It belongs to the universal ribosomal protein uL14 family. In terms of assembly, part of the 50S ribosomal subunit. Forms a cluster with proteins L3 and L24e, part of which may contact the 16S rRNA in 2 intersubunit bridges.

In terms of biological role, binds to 23S rRNA. Forms part of two intersubunit bridges in the 70S ribosome. The polypeptide is Large ribosomal subunit protein uL14 (Ignicoccus hospitalis (strain KIN4/I / DSM 18386 / JCM 14125)).